The primary structure comprises 201 residues: FMN reductase (NADH) RutF 1 (201 aa).

Residues 167–195 (PRAPRSGSAPAEPARAARAVGARPAEGPA) show a composition bias toward low complexity. The tract at residues 167–201 (PRAPRSGSAPAEPARAARAVGARPAEGPALALRSA) is disordered.

Belongs to the non-flavoprotein flavin reductase family. RutF subfamily.

The enzyme catalyses FMNH2 + NAD(+) = FMN + NADH + 2 H(+). Functionally, catalyzes the reduction of FMN to FMNH2 which is used to reduce pyrimidine by RutA via the Rut pathway. In Methylorubrum extorquens (strain CM4 / NCIMB 13688) (Methylobacterium extorquens), this protein is FMN reductase (NADH) RutF 1.